A 224-amino-acid polypeptide reads, in one-letter code: Giant hemoglobin linker AV-1 chain (224 aa).

An LDL-receptor class A domain is found at His62–Val103. Disulfide bonds link Cys64–Cys77, Cys71–Cys90, and Cys84–Cys101. N-linked (GlcNAc...) asparagine glycosylation occurs at Asn108.

Giant hemoglobin is composed of four heme-containing chains (AI to AIV), and two linker chains (AV and AVI).

Functionally, acts as a linker for the assembly of heme-containing chains in the construction of giant hemoglobin. In Lamellibrachia sp. (Deep-sea giant tube worm), this protein is Giant hemoglobin linker AV-1 chain.